Consider the following 267-residue polypeptide: Putative carbamate hydrolase RutD (267 aa).

One can recognise an AB hydrolase-1 domain in the interval 23–139; it reads VVLLSSGLGG…IQRCFDTRIH (117 aa).

The protein belongs to the AB hydrolase superfamily. Hydrolase RutD family.

It catalyses the reaction carbamate + 2 H(+) = NH4(+) + CO2. Involved in pyrimidine catabolism. May facilitate the hydrolysis of carbamate, a reaction that can also occur spontaneously. This Caulobacter segnis (strain ATCC 21756 / DSM 7131 / JCM 7823 / NBRC 15250 / LMG 17158 / TK0059) (Mycoplana segnis) protein is Putative carbamate hydrolase RutD.